The sequence spans 451 residues: MSKITKVFAREILDSRGNPTIQVDVYTLAGGFGSAIVPSGASTGSREALELRDTNTKYADNWYGQKGVMTAVDNVNNIIAPEIIGLCCKNQRLIDQKMIELDGTPNKEKLGANAILGVSLAVAKAAANELRMPLFRYLGGTNPTLMPVPMLNVINGGEHASNTLDFQEFMIMPLGFRTFKEALQAANKVFHNLAKLLKKSGFETQVGDEGGFAPNFNSHEQALDFLVDAIKESGFNPGFKGENAVAIAIDAAASEFYNGQKYVFKKLKSASLNKNQADLDEKFEFNSEELLNYYGQLLAKYPIISIEDGFAESDWQGFIAFNQKYGNNHQIVGDDLTVTNVEILKKAINLKAINSILIKLNQIGTLSETLDAIHLAQKSGMTAVISHRSGESEDTTIADLAVAVSSGQIKTGSLSRTDRIAKYNRLLVIEEYLNSYAKADYIGREVFYNLK.

Q167 is a binding site for (2R)-2-phosphoglycerate. E209 serves as the catalytic Proton donor. D250, E307, and D334 together coordinate Mg(2+). K359, R388, S389, and K410 together coordinate (2R)-2-phosphoglycerate. The Proton acceptor role is filled by K359.

It belongs to the enolase family. Requires Mg(2+) as cofactor.

It is found in the cytoplasm. Its subcellular location is the secreted. The protein localises to the cell surface. It carries out the reaction (2R)-2-phosphoglycerate = phosphoenolpyruvate + H2O. It functions in the pathway carbohydrate degradation; glycolysis; pyruvate from D-glyceraldehyde 3-phosphate: step 4/5. Its function is as follows. Catalyzes the reversible conversion of 2-phosphoglycerate (2-PG) into phosphoenolpyruvate (PEP). It is essential for the degradation of carbohydrates via glycolysis. The polypeptide is Enolase (Mesomycoplasma hyopneumoniae (strain J / ATCC 25934 / NCTC 10110) (Mycoplasma hyopneumoniae)).